Consider the following 503-residue polypeptide: AMP phosphorylase (503 aa).

AMP contacts are provided by residues G168, 194–199, and T203; that span reads SRAITS. Residue D256 is the Proton donor of the active site. The AMP site is built by S264 and K288.

It belongs to the thymidine/pyrimidine-nucleoside phosphorylase family. Type 2 subfamily.

It carries out the reaction AMP + phosphate = alpha-D-ribose 1,5-bisphosphate + adenine. The catalysed reaction is CMP + phosphate = cytosine + alpha-D-ribose 1,5-bisphosphate. The enzyme catalyses UMP + phosphate = alpha-D-ribose 1,5-bisphosphate + uracil. Catalyzes the conversion of AMP and phosphate to adenine and ribose 1,5-bisphosphate (R15P). Exhibits phosphorylase activity toward CMP and UMP in addition to AMP. Functions in an archaeal AMP degradation pathway, together with R15P isomerase and RubisCO. The chain is AMP phosphorylase from Pyrococcus horikoshii (strain ATCC 700860 / DSM 12428 / JCM 9974 / NBRC 100139 / OT-3).